The chain runs to 142 residues: Large ribosomal subunit protein uL13 (142 aa).

This sequence belongs to the universal ribosomal protein uL13 family. Part of the 50S ribosomal subunit.

Its function is as follows. This protein is one of the early assembly proteins of the 50S ribosomal subunit, although it is not seen to bind rRNA by itself. It is important during the early stages of 50S assembly. The sequence is that of Large ribosomal subunit protein uL13 from Histophilus somni (strain 129Pt) (Haemophilus somnus).